Consider the following 338-residue polypeptide: Glutamyl-tRNA reductase (338 aa).

Substrate is bound by residues Thr-50 to Arg-53, Ser-102, Glu-107 to Glu-109, and Gln-113. Catalysis depends on Cys-51, which acts as the Nucleophile. Residue Gly-181 to Asn-186 coordinates NADP(+).

It belongs to the glutamyl-tRNA reductase family. Homodimer.

The enzyme catalyses (S)-4-amino-5-oxopentanoate + tRNA(Glu) + NADP(+) = L-glutamyl-tRNA(Glu) + NADPH + H(+). Its pathway is porphyrin-containing compound metabolism; protoporphyrin-IX biosynthesis; 5-aminolevulinate from L-glutamyl-tRNA(Glu): step 1/2. In terms of biological role, catalyzes the NADPH-dependent reduction of glutamyl-tRNA(Glu) to glutamate 1-semialdehyde (GSA). This Chlamydia caviae (strain ATCC VR-813 / DSM 19441 / 03DC25 / GPIC) (Chlamydophila caviae) protein is Glutamyl-tRNA reductase.